The sequence spans 188 residues: Large ribosomal subunit protein uL22 (188 aa).

A disordered region spans residues 155–188; that stretch reads STPEGAKKGKKKKGTKDAVEKSSKRVKTAATAAH.

It belongs to the universal ribosomal protein uL22 family.

This Agriotes lineatus (Lined click beetle) protein is Large ribosomal subunit protein uL22 (RpL17).